We begin with the raw amino-acid sequence, 353 residues long: Cyclin-dependent kinase-like 1 (353 aa).

The region spanning 4 to 286 (YDRLSKLGEG…CSELMLHGIF (283 aa)) is the Protein kinase domain. ATP-binding positions include 10 to 18 (LGEGSYGVV) and Lys33. Asp126 functions as the Proton acceptor in the catalytic mechanism. The segment at 331–353 (GGNHGNNNNNGNGINRNFLPTIS) is disordered. A compositionally biased stretch (low complexity) spans 335 to 347 (GNNNNNGNGINRN).

The protein belongs to the protein kinase superfamily. Ser/Thr protein kinase family. Specifically expressed in head and tail ciliated sensory neurons.

It is found in the cell projection. It localises to the cilium. It catalyses the reaction L-seryl-[protein] + ATP = O-phospho-L-seryl-[protein] + ADP + H(+). The catalysed reaction is L-threonyl-[protein] + ATP = O-phospho-L-threonyl-[protein] + ADP + H(+). Functionally, modulates cilium assembly. In Caenorhabditis elegans, this protein is Cyclin-dependent kinase-like 1.